We begin with the raw amino-acid sequence, 117 residues long: Multidrug resistance protein EbrB (117 aa).

4 helical membrane-spanning segments follow: residues 3–23 (GLLYLALAIVSEVFGSTMLKL), 31–51 (WPIAGVIVGFLSAFTFLSFSL), 59–79 (AYATWSGVGTALTAIVGFLLF), and 81–101 (ETISLKGVFGLTLVIAGVVVL).

Belongs to the drug/metabolite transporter (DMT) superfamily. Small multidrug resistance (SMR) (TC 2.A.7.1) family. EbrA/EbrB subfamily. In terms of assembly, the efflux pump is composed of EbrA and EbrB.

Its subcellular location is the cell membrane. In terms of biological role, part of a multidrug efflux pump. Confers resistance to cationic lipophilic dyes such as ethidium bromide, acriflavine, pyronine Y and safranin O. The efflux is probably coupled to an influx of protons. This chain is Multidrug resistance protein EbrB (ebrB), found in Bacillus subtilis (strain 168).